Reading from the N-terminus, the 481-residue chain is Probable squalene synthase (481 aa).

2 consecutive transmembrane segments (helical) span residues 294 to 314 (SVFN…ELVF) and 416 to 436 (FLVL…IGAA).

Belongs to the phytoene/squalene synthase family. It depends on Mg(2+) as a cofactor.

Its subcellular location is the endoplasmic reticulum membrane. The enzyme catalyses 2 (2E,6E)-farnesyl diphosphate + NADPH + H(+) = squalene + 2 diphosphate + NADP(+). The catalysed reaction is 2 (2E,6E)-farnesyl diphosphate + NADH + H(+) = squalene + 2 diphosphate + NAD(+). It participates in terpene metabolism; lanosterol biosynthesis; lanosterol from farnesyl diphosphate: step 1/3. Catalyzes the condensation of 2 two farnesyl pyrophosphate moieties to form squalene. It is the first committed enzyme of the sterol biosynthesis pathway. Required for the biosynthesis of ergosterol. The chain is Probable squalene synthase (erg-6) from Neurospora crassa (strain ATCC 24698 / 74-OR23-1A / CBS 708.71 / DSM 1257 / FGSC 987).